The sequence spans 266 residues: Ribonuclease HII (266 aa).

The RNase H type-2 domain occupies 73-266 (SPVAGVDEAG…NCGSRQKCEG (194 aa)). Residues aspartate 79, glutamate 80, and aspartate 173 each contribute to the a divalent metal cation site.

Belongs to the RNase HII family. It depends on Mn(2+) as a cofactor. Mg(2+) serves as cofactor.

It is found in the cytoplasm. It catalyses the reaction Endonucleolytic cleavage to 5'-phosphomonoester.. Its function is as follows. Endonuclease that specifically degrades the RNA of RNA-DNA hybrids. This chain is Ribonuclease HII, found in Pelotomaculum thermopropionicum (strain DSM 13744 / JCM 10971 / SI).